The sequence spans 296 residues: Putative methyltransferase HI_1523 (296 aa).

The protein belongs to the N(4)/N(6)-methyltransferase family.

This is Putative methyltransferase HI_1523 from Haemophilus influenzae (strain ATCC 51907 / DSM 11121 / KW20 / Rd).